Here is an 80-residue protein sequence, read N- to C-terminus: Large ribosomal subunit protein uL29 (80 aa).

The protein belongs to the universal ribosomal protein uL29 family.

The chain is Large ribosomal subunit protein uL29 from Mycobacterium marinum (strain ATCC BAA-535 / M).